The primary structure comprises 123 residues: Large ribosomal subunit protein bL12 (123 aa).

The interval 96 to 123 is disordered; that stretch reads NVKEGVSKEEAEGLKKSLEEAGATVELK. Positions 100–114 are enriched in basic and acidic residues; it reads GVSKEEAEGLKKSLE.

It belongs to the bacterial ribosomal protein bL12 family. In terms of assembly, homodimer. Part of the ribosomal stalk of the 50S ribosomal subunit. Forms a multimeric L10(L12)X complex, where L10 forms an elongated spine to which 2 to 4 L12 dimers bind in a sequential fashion. Binds GTP-bound translation factors.

Forms part of the ribosomal stalk which helps the ribosome interact with GTP-bound translation factors. Is thus essential for accurate translation. The polypeptide is Large ribosomal subunit protein bL12 (Flavobacterium johnsoniae (strain ATCC 17061 / DSM 2064 / JCM 8514 / BCRC 14874 / CCUG 350202 / NBRC 14942 / NCIMB 11054 / UW101) (Cytophaga johnsonae)).